The primary structure comprises 351 residues: Regulator of V-ATPase in vacuolar membrane protein 2 (351 aa).

Component of the RAVE complex composed of RAV1, RAV2 and CBF3D/SKP1. Within the complex, it interacts directly with RAV1 and CBF3D. Interacts with the V-ATPase V1 subunits VMA1, VMA2 and VMA8.

The protein localises to the cytoplasm. The protein resides in the early endosome membrane. In terms of biological role, component of the RAVE complex, which is required for stable assembly of the vacuolar ATPase complex V-ATPase under many conditions. May be required for transport between the early endosome and the late endosome/prevacuolar compartment (PVC). The chain is Regulator of V-ATPase in vacuolar membrane protein 2 (RAV2) from Saccharomyces cerevisiae (strain ATCC 204508 / S288c) (Baker's yeast).